The sequence spans 104 residues: Large ribosomal subunit protein bL21 (104 aa).

The protein belongs to the bacterial ribosomal protein bL21 family. Part of the 50S ribosomal subunit. Contacts protein L20.

This protein binds to 23S rRNA in the presence of protein L20. The sequence is that of Large ribosomal subunit protein bL21 from Lactococcus lactis subsp. cremoris (strain MG1363).